Reading from the N-terminus, the 275-residue chain is 2-dehydro-3-deoxyphosphooctonate aldolase (275 aa).

The protein belongs to the KdsA family.

The protein localises to the cytoplasm. The enzyme catalyses D-arabinose 5-phosphate + phosphoenolpyruvate + H2O = 3-deoxy-alpha-D-manno-2-octulosonate-8-phosphate + phosphate. It participates in carbohydrate biosynthesis; 3-deoxy-D-manno-octulosonate biosynthesis; 3-deoxy-D-manno-octulosonate from D-ribulose 5-phosphate: step 2/3. Its pathway is bacterial outer membrane biogenesis; lipopolysaccharide biosynthesis. This is 2-dehydro-3-deoxyphosphooctonate aldolase from Francisella tularensis subsp. novicida (strain U112).